A 534-amino-acid polypeptide reads, in one-letter code: Envelope glycoprotein (534 aa).

The signal sequence occupies residues 1–34; sequence MEGPTHPKPSKDKTFSWDLMILVGVLLRLDVGMA. Topologically, residues 35–534 are extracellular; sequence NPSPHQIYNV…SLTSLSEVVL (500 aa). Residues Asn-43 and Asn-58 are each glycosylated (N-linked (GlcNAc...) asparagine; by host). 2 disulfide bridges follow: Cys-115–Cys-132 and Cys-124–Cys-137. Residues 245–279 form a disordered region; it reads AMGPNLVLPDQKPPSRQSQIESRVTPHHSQGNGGT. Residues 258–274 are compositionally biased toward polar residues; sequence PSRQSQIESRVTPHHSQ. N-linked (GlcNAc...) asparagine; by host glycans are attached at residues Asn-286, Asn-322, and Asn-327. The short motif at 332 to 335 is the CXXC element; it reads CWLC. 3 N-linked (GlcNAc...) asparagine; by host glycosylation sites follow: Asn-351, Asn-354, and Asn-430. The fusion peptide stretch occupies residues 468 to 488; the sequence is ISLTVALMLGGLTVGGIAAGV. A coiled-coil region spans residues 496-534; the sequence is LETAQFRQLQMAMHTDIQALEESISALEKSLTSLSEVVL.

As to quaternary structure, the mature envelope protein (Env) consists of a trimer of SU-TM heterodimers attached by noncovalent interactions or by a labile interchain disulfide bond. Specific enzymatic cleavages in vivo yield mature proteins. Envelope glycoproteins are synthesized as an inactive precursor that is N-glycosylated and processed likely by host cell furin or by a furin-like protease in the Golgi to yield the mature SU and TM proteins. The cleavage site between SU and TM requires the minimal sequence [KR]-X-[KR]-R.

It is found in the virion membrane. The protein localises to the host cell membrane. The surface protein (SU) attaches the virus to the host cell by binding to its receptor. This interaction triggers the refolding of the transmembrane protein (TM) and is thought to activate its fusogenic potential by unmasking its fusion peptide. Fusion occurs at the host cell plasma membrane. Its function is as follows. The transmembrane protein (TM) acts as a class I viral fusion protein. Under the current model, the protein has at least 3 conformational states: pre-fusion native state, pre-hairpin intermediate state, and post-fusion hairpin state. During viral and target cell membrane fusion, the coiled coil regions (heptad repeats) assume a trimer-of-hairpins structure, positioning the fusion peptide in close proximity to the C-terminal region of the ectodomain. The formation of this structure appears to drive apposition and subsequent fusion of viral and target cell membranes. Membranes fusion leads to delivery of the nucleocapsid into the cytoplasm. This is Envelope glycoprotein (env) from Feline sarcoma virus (strain Snyder-Theilen).